The chain runs to 239 residues: Orotidine 5'-phosphate decarboxylase (239 aa).

Residues D11, K33, 60-69 (DLKFHDIPTT), T117, R178, Q187, G207, and R208 contribute to the substrate site. The Proton donor role is filled by K62.

This sequence belongs to the OMP decarboxylase family. Type 1 subfamily. In terms of assembly, homodimer.

The enzyme catalyses orotidine 5'-phosphate + H(+) = UMP + CO2. It participates in pyrimidine metabolism; UMP biosynthesis via de novo pathway; UMP from orotate: step 2/2. Functionally, catalyzes the decarboxylation of orotidine 5'-monophosphate (OMP) to uridine 5'-monophosphate (UMP). The chain is Orotidine 5'-phosphate decarboxylase from Nitrosospira multiformis (strain ATCC 25196 / NCIMB 11849 / C 71).